Consider the following 283-residue polypeptide: 4-diphosphocytidyl-2-C-methyl-D-erythritol kinase (283 aa).

Residue Lys10 is part of the active site. 99-109 (PMGGGLGGGSS) provides a ligand contact to ATP. Asp141 is a catalytic residue.

The protein belongs to the GHMP kinase family. IspE subfamily. Homodimer.

It catalyses the reaction 4-CDP-2-C-methyl-D-erythritol + ATP = 4-CDP-2-C-methyl-D-erythritol 2-phosphate + ADP + H(+). Its pathway is isoprenoid biosynthesis; isopentenyl diphosphate biosynthesis via DXP pathway; isopentenyl diphosphate from 1-deoxy-D-xylulose 5-phosphate: step 3/6. Catalyzes the phosphorylation of the position 2 hydroxy group of 4-diphosphocytidyl-2C-methyl-D-erythritol. This chain is 4-diphosphocytidyl-2-C-methyl-D-erythritol kinase, found in Salmonella choleraesuis (strain SC-B67).